The chain runs to 275 residues: Formamidopyrimidine-DNA glycosylase (275 aa).

Residue proline 2 is the Schiff-base intermediate with DNA of the active site. The active-site Proton donor is the glutamate 3. The active-site Proton donor; for beta-elimination activity is the lysine 58. Histidine 91, arginine 109, and arginine 154 together coordinate DNA. An FPG-type zinc finger spans residues 240-274 (AVYERAGLPCRVCGAPIRRLVQGQRATYFCPSCQK). Arginine 264 acts as the Proton donor; for delta-elimination activity in catalysis.

It belongs to the FPG family. As to quaternary structure, monomer. Requires Zn(2+) as cofactor.

It catalyses the reaction Hydrolysis of DNA containing ring-opened 7-methylguanine residues, releasing 2,6-diamino-4-hydroxy-5-(N-methyl)formamidopyrimidine.. The catalysed reaction is 2'-deoxyribonucleotide-(2'-deoxyribose 5'-phosphate)-2'-deoxyribonucleotide-DNA = a 3'-end 2'-deoxyribonucleotide-(2,3-dehydro-2,3-deoxyribose 5'-phosphate)-DNA + a 5'-end 5'-phospho-2'-deoxyribonucleoside-DNA + H(+). Its function is as follows. Involved in base excision repair of DNA damaged by oxidation or by mutagenic agents. Acts as a DNA glycosylase that recognizes and removes damaged bases. Has a preference for oxidized purines, such as 7,8-dihydro-8-oxoguanine (8-oxoG). Has AP (apurinic/apyrimidinic) lyase activity and introduces nicks in the DNA strand. Cleaves the DNA backbone by beta-delta elimination to generate a single-strand break at the site of the removed base with both 3'- and 5'-phosphates. This chain is Formamidopyrimidine-DNA glycosylase, found in Bordetella parapertussis (strain 12822 / ATCC BAA-587 / NCTC 13253).